The sequence spans 191 residues: Small ribosomal subunit protein uS5 (191 aa).

Positions 1–21 (MAAERERGGRERSREREERDS) are disordered. One can recognise an S5 DRBM domain in the interval 23-86 (FVDKLVHINR…ESAKRNLTRV (64 aa)).

As to quaternary structure, part of the 30S ribosomal subunit. Contacts proteins S4 and S8.

With S4 and S12 plays an important role in translational accuracy. Its function is as follows. Located at the back of the 30S subunit body where it stabilizes the conformation of the head with respect to the body. The protein is Small ribosomal subunit protein uS5 of Rhodopseudomonas palustris (strain ATCC BAA-98 / CGA009).